The chain runs to 220 residues: Deoxyribose-phosphate aldolase (220 aa).

Catalysis depends on Asp-89, which acts as the Proton donor/acceptor. Lys-151 functions as the Schiff-base intermediate with acetaldehyde in the catalytic mechanism. The active-site Proton donor/acceptor is Lys-180.

This sequence belongs to the DeoC/FbaB aldolase family. DeoC type 1 subfamily.

The protein localises to the cytoplasm. It carries out the reaction 2-deoxy-D-ribose 5-phosphate = D-glyceraldehyde 3-phosphate + acetaldehyde. Its pathway is carbohydrate degradation; 2-deoxy-D-ribose 1-phosphate degradation; D-glyceraldehyde 3-phosphate and acetaldehyde from 2-deoxy-alpha-D-ribose 1-phosphate: step 2/2. In terms of biological role, catalyzes a reversible aldol reaction between acetaldehyde and D-glyceraldehyde 3-phosphate to generate 2-deoxy-D-ribose 5-phosphate. The chain is Deoxyribose-phosphate aldolase from Streptococcus mutans serotype c (strain ATCC 700610 / UA159).